The sequence spans 594 residues: MEPTPFPSWQDVASALVATAAGRAPADLVIRGAKVVLVQTREVMDGWDVAIKHGRFAYVGPDASHCIGEDTQVEELSGHYLIPGLCDGHMHIESGMLTPAEFTRAVIPHGTTSMFTDPHEIANVFGLRGVRLMHDEALLQPINVFTQMPSCAPSAPGLETTGFEIGPDDVSEAMAWPGIVGLGEMMNFPGVVNGSQQMLAEIAATQAAGKTVGGHYASPDLGPAFHAYAAGGPADDHEGTSETDAMARMRQGMRSMIRLGSAWYDIESQITAITERGLDPRNMIICTDDCFAKTLVEDGHMNRAVRHAIDCGCDPLIALQMATINTATHFGLEREIGQIAPGRRADMIVTRDLRTLPIEVVYARGQRVAQFGECLVECPHLDWPTDTRHSVNLGKSLTAADFEIRSDAAEVTANVIGVVENQAPTKALTQTLPVRHGVVEPDGIAQIALVERHRGTGGVTNAFVSGFGYGPGMAMASTVAHDSHHMIVVGTDRAMMAKAAMRLGEVGGGITLWQDGTERALVELPIAGLMSDRPATEVAAKVTQLVEAMEAAGCTLNNAYMQHSLLALVVIPELRISDLGLVDVRTFELTPVLP.

It belongs to the metallo-dependent hydrolases superfamily. Adenine deaminase family. Mn(2+) serves as cofactor.

It catalyses the reaction adenine + H2O + H(+) = hypoxanthine + NH4(+). The sequence is that of Adenine deaminase 1 from Jannaschia sp. (strain CCS1).